A 151-amino-acid polypeptide reads, in one-letter code: UPF0178 protein YaiI (151 aa).

This sequence belongs to the UPF0178 family.

This chain is UPF0178 protein YaiI, found in Salmonella choleraesuis (strain SC-B67).